A 122-amino-acid chain; its full sequence is Large ribosomal subunit protein uL14 (122 aa).

The protein belongs to the universal ribosomal protein uL14 family. Part of the 50S ribosomal subunit. Forms a cluster with proteins L3 and L19. In the 70S ribosome, L14 and L19 interact and together make contacts with the 16S rRNA in bridges B5 and B8.

Its function is as follows. Binds to 23S rRNA. Forms part of two intersubunit bridges in the 70S ribosome. The polypeptide is Large ribosomal subunit protein uL14 (Syntrophotalea carbinolica (strain DSM 2380 / NBRC 103641 / GraBd1) (Pelobacter carbinolicus)).